Reading from the N-terminus, the 115-residue chain is Inner membrane protein YidH (115 aa).

Residues 1–30 (MKISRLGEAPDYRFSLANERTFLAWIRTAL) are Cytoplasmic-facing. A helical transmembrane segment spans residues 31–51 (GFLAAGVGLDQLAPDFATPVI). Residues 52 to 53 (RE) lie on the Periplasmic side of the membrane. A helical membrane pass occupies residues 54-74 (LLALLLCLFSGGLAMYGYLRW). The Cytoplasmic portion of the chain corresponds to 75 to 92 (LRNEKAMRLKEDLPYTNS). The helical transmembrane segment at 93–113 (LLIISLILMVVAVIVMGLVLY) threads the bilayer. At 114-115 (AG) the chain is on the periplasmic side.

To M.tuberculosis Rv2272.

The protein resides in the cell inner membrane. This Escherichia coli O157:H7 protein is Inner membrane protein YidH (yidH).